A 358-amino-acid polypeptide reads, in one-letter code: Holliday junction branch migration complex subunit RuvB (358 aa).

Positions 1-183 are large ATPase domain (RuvB-L); the sequence is MAEPSLVSGG…FGFTGHLEFY (183 aa). Residues Leu22, Arg23, Gly64, Lys67, Thr68, Thr69, 130–132, Arg173, Tyr183, and Arg220 contribute to the ATP site; that span reads EDF. Thr68 contacts Mg(2+). Residues 184 to 254 form a small ATPAse domain (RuvB-S) region; that stretch reads SVAELELVLR…SASAALDMYE (71 aa). The head domain (RuvB-H) stretch occupies residues 257 to 358; sequence ERGLDRLDRS…NHAESVDTVG (102 aa). 2 residues coordinate DNA: Arg312 and Arg317.

The protein belongs to the RuvB family. In terms of assembly, homohexamer. Forms an RuvA(8)-RuvB(12)-Holliday junction (HJ) complex. HJ DNA is sandwiched between 2 RuvA tetramers; dsDNA enters through RuvA and exits via RuvB. An RuvB hexamer assembles on each DNA strand where it exits the tetramer. Each RuvB hexamer is contacted by two RuvA subunits (via domain III) on 2 adjacent RuvB subunits; this complex drives branch migration. In the full resolvosome a probable DNA-RuvA(4)-RuvB(12)-RuvC(2) complex forms which resolves the HJ.

It is found in the cytoplasm. It catalyses the reaction ATP + H2O = ADP + phosphate + H(+). The RuvA-RuvB-RuvC complex processes Holliday junction (HJ) DNA during genetic recombination and DNA repair, while the RuvA-RuvB complex plays an important role in the rescue of blocked DNA replication forks via replication fork reversal (RFR). RuvA specifically binds to HJ cruciform DNA, conferring on it an open structure. The RuvB hexamer acts as an ATP-dependent pump, pulling dsDNA into and through the RuvAB complex. RuvB forms 2 homohexamers on either side of HJ DNA bound by 1 or 2 RuvA tetramers; 4 subunits per hexamer contact DNA at a time. Coordinated motions by a converter formed by DNA-disengaged RuvB subunits stimulates ATP hydrolysis and nucleotide exchange. Immobilization of the converter enables RuvB to convert the ATP-contained energy into a lever motion, pulling 2 nucleotides of DNA out of the RuvA tetramer per ATP hydrolyzed, thus driving DNA branch migration. The RuvB motors rotate together with the DNA substrate, which together with the progressing nucleotide cycle form the mechanistic basis for DNA recombination by continuous HJ branch migration. Branch migration allows RuvC to scan DNA until it finds its consensus sequence, where it cleaves and resolves cruciform DNA. The sequence is that of Holliday junction branch migration complex subunit RuvB from Paenarthrobacter aurescens (strain TC1).